Consider the following 295-residue polypeptide: sn-glycerol-3-phosphate transport system permease protein UgpA (295 aa).

The Cytoplasmic segment spans residues 1-11 (MSSSRPVFRSR). The helical transmembrane segment at 12–32 (WLPYLLVAPQLVITVIFFIWP) threads the bilayer. At 33-80 (AGEALWYSLQSVDPFGFSSQFVGLENFVALFHDSYYLDAFWTTIKFSA) the chain is on the periplasmic side. The ABC transmembrane type-1 domain maps to 76–284 (IKFSALVTFS…FLVIILTVVQ (209 aa)). The chain crosses the membrane as a helical span at residues 81–101 (LVTFSGLLVSLFFAALVDYVV). Topologically, residues 102 to 109 (RGSRFYQT) are cytoplasmic. Residues 110–130 (LMLLPYAVAPAVAAVLWIFLF) form a helical membrane-spanning segment. Residues 131–157 (NPGRGLITHFLGEFGYDWNHAQNSGQA) lie on the Periplasmic side of the membrane. A helical transmembrane segment spans residues 158–178 (MFLVVFASVWKQISYNFLFFF). Residues 179–207 (AALQSIPRSLVEAAAIDGAGPIRRFFRLS) are Cytoplasmic-facing. A helical membrane pass occupies residues 208-228 (LPLIAPVSFFLLVVNLVYAFF). The Periplasmic segment spans residues 229–262 (DTFPVIDAATAGGPVQATTTLIYKIYREGFTGLD). Residues 263-283 (LSASAAQSVVLMFLVIILTVV) traverse the membrane as a helical segment. The Cytoplasmic segment spans residues 284 to 295 (QFRYVESKVRYQ).

It belongs to the binding-protein-dependent transport system permease family. UgpAE subfamily. The complex is composed of two ATP-binding proteins (UgpC), two transmembrane proteins (UgpA and UgpE) and a solute-binding protein (UgpB).

Its subcellular location is the cell inner membrane. In terms of biological role, part of the ABC transporter complex UgpBAEC involved in sn-glycerol-3-phosphate (G3P) import. Probably responsible for the translocation of the substrate across the membrane. This chain is sn-glycerol-3-phosphate transport system permease protein UgpA (ugpA), found in Salmonella typhimurium (strain LT2 / SGSC1412 / ATCC 700720).